Here is a 457-residue protein sequence, read N- to C-terminus: tRNA modification GTPase MnmE (457 aa).

R22, E86, and R125 together coordinate (6S)-5-formyl-5,6,7,8-tetrahydrofolate. One can recognise a TrmE-type G domain in the interval G221 to G381. N231 serves as a coordination point for K(+). GTP-binding positions include N231–S236, T250–T256, and D275–G278. Mg(2+) is bound at residue S235. T250, I252, and T255 together coordinate K(+). T256 is a Mg(2+) binding site. A (6S)-5-formyl-5,6,7,8-tetrahydrofolate-binding site is contributed by K457.

Belongs to the TRAFAC class TrmE-Era-EngA-EngB-Septin-like GTPase superfamily. TrmE GTPase family. Homodimer. Heterotetramer of two MnmE and two MnmG subunits. K(+) is required as a cofactor.

It is found in the cytoplasm. Exhibits a very high intrinsic GTPase hydrolysis rate. Involved in the addition of a carboxymethylaminomethyl (cmnm) group at the wobble position (U34) of certain tRNAs, forming tRNA-cmnm(5)s(2)U34. The chain is tRNA modification GTPase MnmE from Symbiobacterium thermophilum (strain DSM 24528 / JCM 14929 / IAM 14863 / T).